The following is a 212-amino-acid chain: MAYAYLFKYIIIGDTGVGKSCLLLQFTDKRFQPVHDLTIGVEFGARMITIDGKQIKLQIWDTAGQESFRSITRSYYRGAAGALLVYDITRRDTFNHLTTWLEDARQHSNSNMVIMLIGNKSDLESRREVKKEEGEAFAREHGLIFMETSAKTASNVEEAFINTAKEIYEKIQEGVFDINNEANGIKIGPQHAATNATLAGNQGGQQAGGGCC.

Positions 16, 17, 18, 19, 20, 21, and 38 each coordinate GTP. Ser20 provides a ligand contact to Mg(2+). The Switch 1 signature appears at 37–42; the sequence is LTIGVE. Positions 38 and 61 each coordinate Mg(2+). Positions 63 to 72 match the Switch 2 motif; sequence AGQESFRSIT. Residues Gly64, Asn119, Lys120, Asp122, Ala150, and Lys151 each coordinate GTP. 2 S-geranylgeranyl cysteine lipidation sites follow: Cys211 and Cys212.

Belongs to the small GTPase superfamily. Rab family. In terms of assembly, interacts with PRKCI. Interacts with TRIP11. Interacts (in GTP-bound form) with GARIN1B. Requires Mg(2+) as cofactor. In terms of processing, prenylated. Prenylation is required for association with cellular membranes.

Its subcellular location is the endoplasmic reticulum-Golgi intermediate compartment membrane. It localises to the melanosome. The protein resides in the endoplasmic reticulum membrane. It is found in the golgi apparatus membrane. The protein localises to the cytoplasmic vesicle. Its subcellular location is the secretory vesicle. It localises to the acrosome. It carries out the reaction GTP + H2O = GDP + phosphate + H(+). Its activity is regulated as follows. Regulated by guanine nucleotide exchange factors (GEFs) which promote the exchange of bound GDP for free GTP, GTPase activating proteins (GAPs) which increase the GTP hydrolysis activity, and GDP dissociation inhibitors (GDIs) which inhibit the dissociation of the nucleotide from the GTPase. In terms of biological role, the small GTPases Rab are key regulators of intracellular membrane trafficking, from the formation of transport vesicles to their fusion with membranes. Rabs cycle between active GTP-bound and inactive GDP-bound states. In their active state, drive transport of vesicular carriers from donor organelles to acceptor organelles to regulate the membrane traffic that maintains organelle identity and morphology. RAB2A regulates autophagy by promoting autophagosome-lysosome fusion via recruitment of the HOPS endosomal tethering complex; this process involves autophagosomal RAB2A and lysosomal RAB39A recruitment of HOPS subcomplexes VPS39-VPS11 and VPS41-VPS16-VPS18-VPS33A, respectively, which assemble into a functional complex to mediate membrane tethering and SNAREs-driven membrane fusion. Required for protein transport from the endoplasmic reticulum to the Golgi complex. Regulates the compacted morphology of the Golgi. Together with RAB2B, redundantly required for efficient autophagic flux. The sequence is that of Ras-related protein Rab-2A (RAB2A) from Gallus gallus (Chicken).